A 388-amino-acid polypeptide reads, in one-letter code: Ribonuclease D (388 aa).

Residues 7 to 173 (ITDSKTLAQF…QIFPKMLEEL (167 aa)) form the 3'-5' exonuclease domain. In terms of domain architecture, HRDC spans 212 to 293 (KADVLGRLKA…ASHAPLAKEE (82 aa)).

The protein belongs to the RNase D family. It depends on a divalent metal cation as a cofactor.

It localises to the cytoplasm. The catalysed reaction is Exonucleolytic cleavage that removes extra residues from the 3'-terminus of tRNA to produce 5'-mononucleotides.. Its function is as follows. Exonuclease involved in the 3' processing of various precursor tRNAs. Initiates hydrolysis at the 3'-terminus of an RNA molecule and releases 5'-mononucleotides. This Sphingobium indicum (strain DSM 16413 / CCM 7287 / MTCC 6362 / UT26 / NBRC 101211 / UT26S) (Sphingobium japonicum) protein is Ribonuclease D.